A 297-amino-acid polypeptide reads, in one-letter code: L-threonate dehydrogenase (297 aa).

Residues 3–31 and Thr97 each bind NAD(+); that span reads RNIG…VHAC. Lys173 is an active-site residue. Residue Lys241 coordinates NAD(+).

This sequence belongs to the HIBADH-related family. L-threonate dehydrogenase subfamily.

It catalyses the reaction L-threonate + NAD(+) = 2-dehydro-L-erythronate + NADH + H(+). Its function is as follows. Catalyzes oxidation of L-threonate to 2-oxo-tetronate. Can use either NAD(+) or NADP(+) as cosubstrate, with a preference for NAD(+). This chain is L-threonate dehydrogenase, found in Cupriavidus necator (strain ATCC 17699 / DSM 428 / KCTC 22496 / NCIMB 10442 / H16 / Stanier 337) (Ralstonia eutropha).